Consider the following 178-residue polypeptide: NADH-quinone oxidoreductase subunit I (178 aa).

4Fe-4S ferredoxin-type domains lie at 45–74 and 90–119; these read RHPDTGLEKCIGCSLCAAACPAYAIYVEAA and KVYEINMLRCIFCGLCEEACPTGAVVLGNE. [4Fe-4S] cluster contacts are provided by Cys-54, Cys-57, Cys-60, Cys-64, Cys-99, Cys-102, Cys-105, and Cys-109.

The protein belongs to the complex I 23 kDa subunit family. NDH-1 is composed of 15 different subunits. Subunits NuoA, H, J, K, L, M, N constitute the membrane sector of the complex. The cofactor is [4Fe-4S] cluster.

It localises to the cell membrane. The catalysed reaction is a quinone + NADH + 5 H(+)(in) = a quinol + NAD(+) + 4 H(+)(out). Functionally, NDH-1 shuttles electrons from NADH, via FMN and iron-sulfur (Fe-S) centers, to quinones in the respiratory chain. The immediate electron acceptor for the enzyme in this species is believed to be ubiquinone. Couples the redox reaction to proton translocation (for every two electrons transferred, four hydrogen ions are translocated across the cytoplasmic membrane), and thus conserves the redox energy in a proton gradient. This Deinococcus radiodurans (strain ATCC 13939 / DSM 20539 / JCM 16871 / CCUG 27074 / LMG 4051 / NBRC 15346 / NCIMB 9279 / VKM B-1422 / R1) protein is NADH-quinone oxidoreductase subunit I.